The following is a 508-amino-acid chain: 2,3-bisphosphoglycerate-independent phosphoglycerate mutase (508 aa).

Mn(2+)-binding residues include aspartate 13 and serine 63. The active-site Phosphoserine intermediate is the serine 63. Substrate contacts are provided by residues histidine 122, 152-153, arginine 184, arginine 190, 256-259, and lysine 330; these read RD and RADR. Mn(2+)-binding residues include aspartate 397, histidine 401, aspartate 438, histidine 439, and histidine 457.

It belongs to the BPG-independent phosphoglycerate mutase family. Monomer. The cofactor is Mn(2+).

It catalyses the reaction (2R)-2-phosphoglycerate = (2R)-3-phosphoglycerate. It functions in the pathway carbohydrate degradation; glycolysis; pyruvate from D-glyceraldehyde 3-phosphate: step 3/5. Catalyzes the interconversion of 2-phosphoglycerate and 3-phosphoglycerate. In Laribacter hongkongensis (strain HLHK9), this protein is 2,3-bisphosphoglycerate-independent phosphoglycerate mutase.